A 317-amino-acid chain; its full sequence is Probable cell division protein WhiA (317 aa).

The segment at residues 281–314 is a DNA-binding region (H-T-H motif); that stretch reads SLKELGQMLDPPVGKSGINHRLRRIEKIAEELRK.

This sequence belongs to the WhiA family.

Functionally, involved in cell division and chromosome segregation. In Clostridium novyi (strain NT), this protein is Probable cell division protein WhiA.